We begin with the raw amino-acid sequence, 723 residues long: Fatty acid oxidation complex subunit alpha (723 aa).

Positions 1–189 are enoyl-CoA hydratase/isomerase; that stretch reads MIYQAETLQV…KIGLLDAVVD (189 aa). Residue Asp-296 participates in substrate binding. The interval 311–723 is 3-hydroxyacyl-CoA dehydrogenase; it reads NKETQRAAVL…FYGAQQQGSI (413 aa). Residues Met-325, Asp-344, 401–403, Lys-408, and Ser-430 contribute to the NAD(+) site; that span reads VVE. Residue His-451 is the For 3-hydroxyacyl-CoA dehydrogenase activity of the active site. An NAD(+)-binding site is contributed by Asn-454. The substrate site is built by Asn-501 and Tyr-661.

The protein in the N-terminal section; belongs to the enoyl-CoA hydratase/isomerase family. This sequence in the C-terminal section; belongs to the 3-hydroxyacyl-CoA dehydrogenase family. Heterotetramer of two alpha chains (FadB) and two beta chains (FadA).

The enzyme catalyses a (3S)-3-hydroxyacyl-CoA + NAD(+) = a 3-oxoacyl-CoA + NADH + H(+). The catalysed reaction is a (3S)-3-hydroxyacyl-CoA = a (2E)-enoyl-CoA + H2O. It catalyses the reaction a 4-saturated-(3S)-3-hydroxyacyl-CoA = a (3E)-enoyl-CoA + H2O. It carries out the reaction (3S)-3-hydroxybutanoyl-CoA = (3R)-3-hydroxybutanoyl-CoA. The enzyme catalyses a (3Z)-enoyl-CoA = a 4-saturated (2E)-enoyl-CoA. The catalysed reaction is a (3E)-enoyl-CoA = a 4-saturated (2E)-enoyl-CoA. It functions in the pathway lipid metabolism; fatty acid beta-oxidation. Involved in the aerobic and anaerobic degradation of long-chain fatty acids via beta-oxidation cycle. Catalyzes the formation of 3-oxoacyl-CoA from enoyl-CoA via L-3-hydroxyacyl-CoA. It can also use D-3-hydroxyacyl-CoA and cis-3-enoyl-CoA as substrate. The polypeptide is Fatty acid oxidation complex subunit alpha (Vibrio vulnificus (strain CMCP6)).